Consider the following 179-residue polypeptide: Arginine repressor (179 aa).

The protein belongs to the ArgR family.

Its subcellular location is the cytoplasm. Its pathway is amino-acid biosynthesis; L-arginine biosynthesis [regulation]. In terms of biological role, regulates arginine biosynthesis genes. The chain is Arginine repressor from Renibacterium salmoninarum (strain ATCC 33209 / DSM 20767 / JCM 11484 / NBRC 15589 / NCIMB 2235).